Reading from the N-terminus, the 396-residue chain is Acetate kinase (396 aa).

Asn-8 is a binding site for Mg(2+). Lys-15 provides a ligand contact to ATP. Residue Arg-90 coordinates substrate. Catalysis depends on Asp-147, which acts as the Proton donor/acceptor. ATP is bound by residues His-207–Gly-211, Asp-283–Arg-285, and Gly-330–Asn-334. Glu-384 lines the Mg(2+) pocket.

It belongs to the acetokinase family. Homodimer. It depends on Mg(2+) as a cofactor. The cofactor is Mn(2+).

Its subcellular location is the cytoplasm. The catalysed reaction is acetate + ATP = acetyl phosphate + ADP. It participates in metabolic intermediate biosynthesis; acetyl-CoA biosynthesis; acetyl-CoA from acetate: step 1/2. In terms of biological role, catalyzes the formation of acetyl phosphate from acetate and ATP. Can also catalyze the reverse reaction. In Lacticaseibacillus paracasei (strain ATCC 334 / BCRC 17002 / CCUG 31169 / CIP 107868 / KCTC 3260 / NRRL B-441) (Lactobacillus paracasei), this protein is Acetate kinase.